The primary structure comprises 281 residues: Src-like-adapter (281 aa).

The interval 1–20 (MGNSMKSTSPPSERPLSSSE) is disordered. A lipid anchor (N-myristoyl glycine) is attached at Gly2. Over residues 7-20 (STSPPSERPLSSSE) the composition is skewed to low complexity. An SH3 domain is found at 22–82 (LESDFLAVLT…PGICVARVYH (61 aa)). The region spanning 84-175 (WLFEGLGRDK…GLCCVLTTPC (92 aa)) is the SH2 domain. Positions 190 to 281 (CTSPGSPVTL…FFSAPQYFED (92 aa)) are SLA C-terminal. Ser258 is modified (phosphoserine). The residue at position 278 (Tyr278) is a Phosphotyrosine.

As to quaternary structure, homodimer. Interacts with phosphorylated CBL, SYK and LAT. Homodimerization and interaction with phosphorylated CBL occurs via its C-terminal domain. Interacts with PDGFRB and EPHA2. Interacts with phosphorylated proteins ZAP70; CD3Z; VAV1 and LCP2 via its SH2 domain. As to expression, predominantly expressed in lymphoid tissues. Highly expressed in spleen, thymus and lymph nodes. Weakly expressed in lung and brain. Expressed in T-cells and at low level in B-cells.

The protein localises to the cytoplasm. It is found in the endosome. Adapter protein, which negatively regulates T-cell receptor (TCR) signaling. Inhibits T-cell antigen-receptor induced activation of nuclear factor of activated T-cells. Involved in the negative regulation of positive selection and mitosis of T-cells. May act by linking signaling proteins such as ZAP70 with CBL, leading to a CBL dependent degradation of signaling proteins. In Mus musculus (Mouse), this protein is Src-like-adapter (Sla).